The chain runs to 65 residues: Large ribosomal subunit protein bL35 (65 aa).

It belongs to the bacterial ribosomal protein bL35 family.

The polypeptide is Large ribosomal subunit protein bL35 (Geobacter sp. (strain M21)).